Reading from the N-terminus, the 519-residue chain is Cytochrome P450 monooxygenase apdE (519 aa).

The helical transmembrane segment at 27 to 47 (FVFFAFVVYSCFTIAVGWVVY) threads the bilayer. N327 and N379 each carry an N-linked (GlcNAc...) asparagine glycan. Heme is bound at residue C466. N-linked (GlcNAc...) asparagine glycosylation is present at N508.

Belongs to the cytochrome P450 family. Requires heme as cofactor.

Its subcellular location is the membrane. It participates in secondary metabolite biosynthesis. In terms of biological role, cytochrome P450 monooxygenase; part of the gene cluster that mediates the biosynthesis of aspyridones. The polyketide-amino acid backbone preaspyridone A is first assembled by the PKS-NRPS hybrid apdA. The assembly of preaspyridone A is initiated by loading of malonyl-CoA onto apdA, followed by decarboxylation to yield the acetyl starter unit. The growing polyketide chain then elongates into a tetraketide. The adpA PKS module catalyzes three Claisen condensations, as well as beta-keto processing and methylation. Alpha-methylation step during polyketide synthesis is a prerequisite and a key checkpoint for chain transfer between PKS and NRPS modules. The downstream NRPS module contains the condensation (C), adenylation (A), and thiolation (T) domains and catalyzes the incorporation of tyrosine via the formation of the L-tyrosinyl-thioester and the amide linkage between L-tyrosinyl-thioester and the tetraketide. The bimodular assembly line is terminated with a reductase (R) domain that facilitates formation and release of the tetramic acid product. Because apdA lacks a designated enoylreductase (ER) domain, the required activity is provided the enoyl reductase apdC. ApdC appears to operate with different stereoselectivity in different PKS cycle. Combined with apdC, apdA is proposed to synthesize preaspyridone A via about 20 enzymatic steps. A number of oxidative steps performed successively by the cytochrome P450 monooxygenases apdE and apdB are required for the conversion of preaspyridone A to aspyridone A. The cytochrome P450 monooxygenase apdE is responsible for the oxidative dephenylation of preaspyridone A. Finally, the predicted FAD-dependent monooxygenase apdD and the acyl-CoA dehydrogenase apdG may be involved in the transformation of aspyridone A into aspyridone B. This chain is Cytochrome P450 monooxygenase apdE, found in Emericella nidulans (strain FGSC A4 / ATCC 38163 / CBS 112.46 / NRRL 194 / M139) (Aspergillus nidulans).